We begin with the raw amino-acid sequence, 37 residues long: Cytochrome b6-f complex subunit 5 (37 aa).

The chain crosses the membrane as a helical span at residues 5–25; that stretch reads LLSGIVLGLVPITLAGLFVTA.

Belongs to the PetG family. As to quaternary structure, the 4 large subunits of the cytochrome b6-f complex are cytochrome b6, subunit IV (17 kDa polypeptide, PetD), cytochrome f and the Rieske protein, while the 4 small subunits are PetG, PetL, PetM and PetN. The complex functions as a dimer.

The protein localises to the plastid. It is found in the chloroplast thylakoid membrane. In terms of biological role, component of the cytochrome b6-f complex, which mediates electron transfer between photosystem II (PSII) and photosystem I (PSI), cyclic electron flow around PSI, and state transitions. PetG is required for either the stability or assembly of the cytochrome b6-f complex. In Gnetum parvifolium (Small-leaved jointfir), this protein is Cytochrome b6-f complex subunit 5.